We begin with the raw amino-acid sequence, 455 residues long: 3-phosphoshikimate 1-carboxyvinyltransferase (455 aa).

Residues 1 to 23 (MSHGSNPRPATARKSSDLKGTLR) are disordered. 3 residues coordinate 3-phosphoshikimate: K28, S29, and R33. K28 is a binding site for phosphoenolpyruvate. Phosphoenolpyruvate-binding residues include G100 and R128. Residues S173, Q175, D326, and K353 each coordinate 3-phosphoshikimate. Q175 is a binding site for phosphoenolpyruvate. Residue D326 is the Proton acceptor of the active site. Residues R357 and R405 each coordinate phosphoenolpyruvate.

This sequence belongs to the EPSP synthase family. Monomer.

The protein localises to the cytoplasm. It catalyses the reaction 3-phosphoshikimate + phosphoenolpyruvate = 5-O-(1-carboxyvinyl)-3-phosphoshikimate + phosphate. The protein operates within metabolic intermediate biosynthesis; chorismate biosynthesis; chorismate from D-erythrose 4-phosphate and phosphoenolpyruvate: step 6/7. Functionally, catalyzes the transfer of the enolpyruvyl moiety of phosphoenolpyruvate (PEP) to the 5-hydroxyl of shikimate-3-phosphate (S3P) to produce enolpyruvyl shikimate-3-phosphate and inorganic phosphate. The chain is 3-phosphoshikimate 1-carboxyvinyltransferase from Rhizobium meliloti (strain 1021) (Ensifer meliloti).